A 511-amino-acid chain; its full sequence is DEP domain-containing protein 7 (511 aa).

The region spanning 46-136 (LQTQVEVKKR…SSCSLYRFTT (91 aa)) is the DEP domain.

Belongs to the DEPDC7 family.

The protein is DEP domain-containing protein 7 (Depdc7) of Rattus norvegicus (Rat).